Reading from the N-terminus, the 90-residue chain is Probable Fe(2+)-trafficking protein (90 aa).

It belongs to the Fe(2+)-trafficking protein family.

Its function is as follows. Could be a mediator in iron transactions between iron acquisition and iron-requiring processes, such as synthesis and/or repair of Fe-S clusters in biosynthetic enzymes. In Colwellia psychrerythraea (strain 34H / ATCC BAA-681) (Vibrio psychroerythus), this protein is Probable Fe(2+)-trafficking protein.